The sequence spans 523 residues: Transmembrane protein 266 (523 aa).

Residues 1-94 (MTNPQPAIEG…VFLLSASLNS (94 aa)) lie on the Cytoplasmic side of the membrane. The helical transmembrane segment at 95–115 (FLVACVILVVILLTLELLIDI) threads the bilayer. Topologically, residues 116-121 (KLLQFS) are extracellular. Residues 122–142 (SAFQFAGVIHWISLVILSVFF) form a helical membrane-spanning segment. Over 143-161 (SETVLRIVVLGIWDYIENK) the chain is Cytoplasmic. The helical transmembrane segment at 162–182 (IEVFDGAVIILSLAPMVASTV) threads the bilayer. The Extracellular portion of the chain corresponds to 183-191 (ANGPRSPWD). A helical membrane pass occupies residues 192–212 (AISLIIMLRIWRVKRVIDAYV). Residues 213 to 523 (LPVKLEMEMV…EQKLHRVPEA (311 aa)) are Cytoplasmic-facing. Residues 218-270 (EMEMVIQQYEKAKVIQDEQLERLTQICQEQGFEIRQLRAHLAQQDLDLAAERE) adopt a coiled-coil conformation. Residues 380–477 (SASRSSVTRA…PELEHRVSLF (98 aa)) form a disordered region. The span at 382–397 (SRSSVTRAQSDSSQTL) shows a compositional bias: low complexity. Polar residues predominate over residues 398–411 (GSSMDCSTAREEPS). Pro residues predominate over residues 421–430 (LPSQQQVEEA).

In terms of assembly, homodimer; disulfide-linked. As to expression, mainly expressed in the cerebellum. Also expressed in cerebral cortex, skeletal muscle and thyroid, but at much lower levels.

The protein resides in the cell membrane. It localises to the cell projection. The protein localises to the dendrite. It is found in the perikaryon. Its function is as follows. Voltage-sensor protein present on the post-synaptic side of glutamatergic mossy fibers and granule cells in the cerebellum. Despite the presence of a voltage-sensor segment, does not form a functional ion channel and its precise role remains unclear. Undergoes both rapid and slow structural rearrangements in response to changes in voltage. Contains a zinc-binding site that can regulate the slow conformational transition. The chain is Transmembrane protein 266 from Homo sapiens (Human).